The chain runs to 286 residues: Secretory carrier-associated membrane protein 2 (286 aa).

2 stretches are compositionally biased toward basic and acidic residues: residues 1 to 10 (MAGRYDRNPF) and 54 to 63 (STKDMKKKEK). Positions 1-63 (MAGRYDRNPF…STKDMKKKEK (63 aa)) are disordered. At 1 to 126 (MAGRYDRNPF…LQRMQYLAFS (126 aa)) the chain is on the cytoplasmic side. Positions 52–89 (LDSTKDMKKKEKELQAKEAELNKRESELRRREEAASRA) form a coiled coil. The next 4 membrane-spanning stretches (helical) occupy residues 127-147 (SLLG…AAWI), 152-172 (VMIW…AYVL), 189-209 (FGWF…SAVA), and 237-257 (IFYF…VVVI). At 258–286 (QQVYMYFRGSGKAAEMKREAARGAMRSAF) the chain is on the cytoplasmic side.

The protein belongs to the SCAMP family.

The protein resides in the cell membrane. It localises to the cytoplasmic vesicle. Its subcellular location is the secretory vesicle membrane. Probably involved in membrane trafficking. The sequence is that of Secretory carrier-associated membrane protein 2 (SCAMP2) from Oryza sativa subsp. japonica (Rice).